The following is a 507-amino-acid chain: Phosphoprotein (507 aa).

The segment at 1–48 (MAEEQARHVKNGLECIRALKAEPIGSLAIGEAMAAWSEISDNPGQEQA) is interaction with N0. Disordered stretches follow at residues 40–98 (SDNP…FPSR), 134–174 (GLDG…APIS), 201–231 (NNFP…IKKG), and 251–305 (ATQC…KGGD). S86 carries the phosphoserine modification. The span at 134-145 (GLDGDSTLSGGD) shows a compositional bias: low complexity. Residues 146-160 (NESENSDVDIGEPDT) are compositionally biased toward acidic residues. S151 bears the Phosphoserine mark. Positions 260–270 (SEPSGPGAPAG) are enriched in low complexity. A compositionally biased stretch (polar residues) spans 279-300 (AALTQEWTPESGTTISPRSQNK). Residues 304-376 (GDYYDDELFS…LSSIMIAIPG (73 aa)) form a multimerization region. 2 interaction with the L polymerase regions span residues 361 to 377 (STLE…IPGL) and 396 to 410 (PIIG…AEVL). Positions 457–507 (GPASRSVIRSIIKSSRIEEDRKRYLMTLLDDIKGANDLAKFHQMLMKIIMK) are x domain (XD). Residues 459–507 (ASRSVIRSIIKSSRIEEDRKRYLMTLLDDIKGANDLAKFHQMLMKIIMK) form an interaction with the nucleocapsid (N-RNA) region.

Belongs to the morbillivirus P protein family. As to quaternary structure, homotetramer. Interacts (via multimerization domain and XD domain) with polymerase L; this interaction forms the polymerase L-P complex. Interacts (via N-terminus) with N0 (via Ncore); this interaction allows P to chaperon N0 to avoid N polymerization and non-specific RNA binding before encapsidation. Interacts (via C-terminus) with N-RNA template (via Ntail); this interaction maintains the P/L complex anchored to the nucleocapsid template during the sequential transcription. Interacts (via C-terminus) with protein C this interaction allows C to associate with the ribonucleocapsid. In terms of processing, phosphorylation on serines by host CK2 is necessary for the formation of viral factories.

Its function is as follows. Essential cofactor of the RNA polymerase L that plays a central role in the transcription and replication by forming the polymerase complex with RNA polymerase L and recruiting L to the genomic N-RNA template for RNA synthesis. Also plays a central role in the encapsidation of nascent RNA chains by forming the encapsidation complex with the nucleocapsid protein N (N-P complex). Acts as a chaperone for newly synthesized free N protein, so-called N0, allowing encapsidation of nascent RNA chains during replication. The nucleoprotein protein N prevents excessive phosphorylation of P, which leads to down-regulation of viral transcription/ replication. Participates, together with N, in the formation of viral factories (viroplasms), which are large inclusions in the host cytoplasm where replication takes place. The polypeptide is Phosphoprotein (P/V) (Homo sapiens (Human)).